The primary structure comprises 207 residues: Proteasome subunit beta 2 (207 aa).

Positions 1–13 (METNNKLKILKTG) are cleaved as a propeptide — removed in mature form; by autocatalysis. Catalysis depends on Thr-14, which acts as the Nucleophile.

It belongs to the peptidase T1B family. As to quaternary structure, the 20S proteasome core is composed of 14 alpha and 14 beta subunits that assemble into four stacked heptameric rings, resulting in a barrel-shaped structure. The two inner rings, each composed of seven catalytic beta subunits, are sandwiched by two outer rings, each composed of seven alpha subunits. The catalytic chamber with the active sites is on the inside of the barrel. Has a gated structure, the ends of the cylinder being occluded by the N-termini of the alpha-subunits. Is capped at one or both ends by the proteasome regulatory ATPase, PAN.

It is found in the cytoplasm. It carries out the reaction Cleavage of peptide bonds with very broad specificity.. Its activity is regulated as follows. The formation of the proteasomal ATPase PAN-20S proteasome complex, via the docking of the C-termini of PAN into the intersubunit pockets in the alpha-rings, triggers opening of the gate for substrate entry. Interconversion between the open-gate and close-gate conformations leads to a dynamic regulation of the 20S proteasome proteolysis activity. In terms of biological role, component of the proteasome core, a large protease complex with broad specificity involved in protein degradation. The chain is Proteasome subunit beta 2 from Sulfurisphaera tokodaii (strain DSM 16993 / JCM 10545 / NBRC 100140 / 7) (Sulfolobus tokodaii).